A 342-amino-acid chain; its full sequence is Methionyl-tRNA formyltransferase (342 aa).

Residue 110-113 (SLLP) participates in (6S)-5,6,7,8-tetrahydrofolate binding.

It belongs to the Fmt family.

The enzyme catalyses L-methionyl-tRNA(fMet) + (6R)-10-formyltetrahydrofolate = N-formyl-L-methionyl-tRNA(fMet) + (6S)-5,6,7,8-tetrahydrofolate + H(+). In terms of biological role, attaches a formyl group to the free amino group of methionyl-tRNA(fMet). The formyl group appears to play a dual role in the initiator identity of N-formylmethionyl-tRNA by promoting its recognition by IF2 and preventing the misappropriation of this tRNA by the elongation apparatus. The chain is Methionyl-tRNA formyltransferase from Synechococcus sp. (strain CC9311).